The following is a 65-amino-acid chain: NADH dehydrogenase [ubiquinone] 1 alpha subcomplex subunit 1 (65 aa).

The chain crosses the membrane as a helical span at residues 3–23 (LVWLEAMLPLGIIGGMLCIMG).

The protein belongs to the complex I NDUFA1 subunit family. In terms of assembly, complex I is composed of at least 49 different subunits.

It localises to the mitochondrion inner membrane. Functionally, accessory subunit of the mitochondrial membrane respiratory chain NADH dehydrogenase (Complex I), that is believed not to be involved in catalysis. Complex I functions in the transfer of electrons from NADH to the respiratory chain. The immediate electron acceptor for the enzyme is believed to be ubiquinone. The polypeptide is NADH dehydrogenase [ubiquinone] 1 alpha subcomplex subunit 1 (Arabidopsis thaliana (Mouse-ear cress)).